The following is a 272-amino-acid chain: Proteasome subunit beta (272 aa).

A propeptide spans 1-47 (removed in mature form; by autocatalysis); that stretch reads MSTGGDRLPEAFLRPGSSSFVEFLREVAPQSHPEHARPAGAGDVVHA. The Nucleophile role is filled by T48.

It belongs to the peptidase T1B family. As to quaternary structure, the 20S proteasome core is composed of 14 alpha and 14 beta subunits that assemble into four stacked heptameric rings, resulting in a barrel-shaped structure. The two inner rings, each composed of seven catalytic beta subunits, are sandwiched by two outer rings, each composed of seven alpha subunits. The catalytic chamber with the active sites is on the inside of the barrel. Has a gated structure, the ends of the cylinder being occluded by the N-termini of the alpha-subunits. Is capped by the proteasome-associated ATPase, ARC.

Its subcellular location is the cytoplasm. The enzyme catalyses Cleavage of peptide bonds with very broad specificity.. The protein operates within protein degradation; proteasomal Pup-dependent pathway. With respect to regulation, the formation of the proteasomal ATPase ARC-20S proteasome complex, likely via the docking of the C-termini of ARC into the intersubunit pockets in the alpha-rings, may trigger opening of the gate for substrate entry. Interconversion between the open-gate and close-gate conformations leads to a dynamic regulation of the 20S proteasome proteolysis activity. In terms of biological role, component of the proteasome core, a large protease complex with broad specificity involved in protein degradation. The sequence is that of Proteasome subunit beta from Beutenbergia cavernae (strain ATCC BAA-8 / DSM 12333 / CCUG 43141 / JCM 11478 / NBRC 16432 / NCIMB 13614 / HKI 0122).